A 176-amino-acid chain; its full sequence is Peptide methionine sulfoxide reductase MsrA (176 aa).

C10 is a catalytic residue.

This sequence belongs to the MsrA Met sulfoxide reductase family.

The catalysed reaction is L-methionyl-[protein] + [thioredoxin]-disulfide + H2O = L-methionyl-(S)-S-oxide-[protein] + [thioredoxin]-dithiol. The enzyme catalyses [thioredoxin]-disulfide + L-methionine + H2O = L-methionine (S)-S-oxide + [thioredoxin]-dithiol. Functionally, has an important function as a repair enzyme for proteins that have been inactivated by oxidation. Catalyzes the reversible oxidation-reduction of methionine sulfoxide in proteins to methionine. This Chromobacterium violaceum (strain ATCC 12472 / DSM 30191 / JCM 1249 / CCUG 213 / NBRC 12614 / NCIMB 9131 / NCTC 9757 / MK) protein is Peptide methionine sulfoxide reductase MsrA.